We begin with the raw amino-acid sequence, 170 residues long: MNIDRNRLIGSVIFIFILVFIDQWSKYLVVKYISIGTEYLSFFGDFFKIIHVRNTGILFSIGANINSSLKNLFFLVIPIIILVFVFCFILKETNKIARIALILILSGGIGNIIDRLFRPLGVVDFLDVKFFGIFGLQRWPTFNFADSYVVIGITLFIIYDLFAKNKSTDL.

The next 3 helical transmembrane spans lie at 9 to 29 (IGSV…KYLV), 72 to 92 (LFFL…ILKE), and 93 to 113 (TNKI…GNII). Active-site residues include Asp124 and Asp146. The chain crosses the membrane as a helical span at residues 142 to 162 (FNFADSYVVIGITLFIIYDLF).

It belongs to the peptidase A8 family.

The protein localises to the cell inner membrane. The enzyme catalyses Release of signal peptides from bacterial membrane prolipoproteins. Hydrolyzes -Xaa-Yaa-Zaa-|-(S,diacylglyceryl)Cys-, in which Xaa is hydrophobic (preferably Leu), and Yaa (Ala or Ser) and Zaa (Gly or Ala) have small, neutral side chains.. Its pathway is protein modification; lipoprotein biosynthesis (signal peptide cleavage). This protein specifically catalyzes the removal of signal peptides from prolipoproteins. This Borrelia hermsii (strain HS1 / DAH) protein is Lipoprotein signal peptidase.